The sequence spans 483 residues: Aspartyl/glutamyl-tRNA(Asn/Gln) amidotransferase subunit B (483 aa).

Belongs to the GatB/GatE family. GatB subfamily. Heterotrimer of A, B and C subunits.

It carries out the reaction L-glutamyl-tRNA(Gln) + L-glutamine + ATP + H2O = L-glutaminyl-tRNA(Gln) + L-glutamate + ADP + phosphate + H(+). It catalyses the reaction L-aspartyl-tRNA(Asn) + L-glutamine + ATP + H2O = L-asparaginyl-tRNA(Asn) + L-glutamate + ADP + phosphate + 2 H(+). In terms of biological role, allows the formation of correctly charged Asn-tRNA(Asn) or Gln-tRNA(Gln) through the transamidation of misacylated Asp-tRNA(Asn) or Glu-tRNA(Gln) in organisms which lack either or both of asparaginyl-tRNA or glutaminyl-tRNA synthetases. The reaction takes place in the presence of glutamine and ATP through an activated phospho-Asp-tRNA(Asn) or phospho-Glu-tRNA(Gln). The polypeptide is Aspartyl/glutamyl-tRNA(Asn/Gln) amidotransferase subunit B (Roseiflexus castenholzii (strain DSM 13941 / HLO8)).